Reading from the N-terminus, the 746-residue chain is Centromere protein I (746 aa).

A disordered region spans residues 1 to 24 (MATQRVTRNSQQQNRISQGSNSRQ).

Belongs to the CENP-I/CTF3 family. As to quaternary structure, component of the CENPA-CAD complex, composed of CENPI, CENPK, CENPL, CENPO, CENPP, CENPQ, CENPR and CENPS. The CENPA-CAD complex interacts with the CENPA-NAC complex, at least composed of CENPA, CENPC, CENPH, CENPM, CENPN, CENPT and CENPU. Interacts with SENP6. Post-translationally, sumoylated. Sumoylated form can be polyubiquitinated by RNF4, leading to its degradation. Desumoylation by SENP6 prevents its degradation.

The protein localises to the nucleus. It localises to the chromosome. It is found in the centromere. Component of the CENPA-CAD (nucleosome distal) complex, a complex recruited to centromeres which is involved in assembly of kinetochore proteins, mitotic progression and chromosome segregation. May be involved in incorporation of newly synthesized CENPA into centromeres via its interaction with the CENPA-NAC complex. Required for the localization of CENPF, MAD1L1 and MAD2 (MAD2L1 or MAD2L2) to kinetochores. Involved in the response of gonadal tissues to follicle-stimulating hormone. The polypeptide is Centromere protein I (Cenpi) (Mus musculus (Mouse)).